The following is a 169-amino-acid chain: MKKRTIAELLTDIRMAKYKIDMWISKAENRNKALERLSLSNIGRFPLLSKEYIKETELTRKYIVTLVQLKILLEILEIRLETLIILGNVVTYLSPLVEALNELKGQLGASIEFSPIIDEIIETIRTVYIAPNTVQQSPQINVKEEARQLLKEAEDVAKKELKENYKIEI.

Its function is as follows. Part of a cell division machinery. May fulfill a coordination function between the Cdv proteins during cell division. The protein is Cell division protein B3 of Sulfolobus acidocaldarius (strain ATCC 33909 / DSM 639 / JCM 8929 / NBRC 15157 / NCIMB 11770).